A 71-amino-acid chain; its full sequence is Small ribosomal subunit protein bS21 (71 aa).

Belongs to the bacterial ribosomal protein bS21 family.

This Buchnera aphidicola subsp. Cinara cedri (strain Cc) protein is Small ribosomal subunit protein bS21.